Reading from the N-terminus, the 239-residue chain is DNA repair protein RecO (239 aa).

Belongs to the RecO family.

In terms of biological role, involved in DNA repair and RecF pathway recombination. The chain is DNA repair protein RecO from Aromatoleum aromaticum (strain DSM 19018 / LMG 30748 / EbN1) (Azoarcus sp. (strain EbN1)).